The chain runs to 348 residues: Nicotinate-nucleotide--dimethylbenzimidazole phosphoribosyltransferase (348 aa).

Glutamate 316 serves as the catalytic Proton acceptor.

It belongs to the CobT family.

It catalyses the reaction 5,6-dimethylbenzimidazole + nicotinate beta-D-ribonucleotide = alpha-ribazole 5'-phosphate + nicotinate + H(+). It participates in nucleoside biosynthesis; alpha-ribazole biosynthesis; alpha-ribazole from 5,6-dimethylbenzimidazole: step 1/2. Its function is as follows. Catalyzes the synthesis of alpha-ribazole-5'-phosphate from nicotinate mononucleotide (NAMN) and 5,6-dimethylbenzimidazole (DMB). The protein is Nicotinate-nucleotide--dimethylbenzimidazole phosphoribosyltransferase of Xanthomonas campestris pv. campestris (strain 8004).